A 410-amino-acid polypeptide reads, in one-letter code: Protein translocase subunit SecY 2 (410 aa).

Helical transmembrane passes span 2–22 (ILII…SAAL), 45–65 (FSIM…VQLL), 94–114 (LTLV…NTLT), 125–145 (FTII…MWLG), 147–167 (LITE…GILV), 188–208 (WIRF…IVWF), 241–261 (VIPV…LMFF), 284–304 (GVII…IVQI), 339–359 (YLSL…LLVA), and 366–386 (LQIG…IEIG).

This sequence belongs to the SecY/SEC61-alpha family. Component of the Sec protein translocase complex. Heterotrimer consisting of SecY, SecE and SecG subunits. The heterotrimers can form oligomers, although 1 heterotrimer is thought to be able to translocate proteins. Interacts with the ribosome. Interacts with SecDF, and other proteins may be involved. Interacts with SecA.

Its subcellular location is the cell membrane. The central subunit of the protein translocation channel SecYEG. Consists of two halves formed by TMs 1-5 and 6-10. These two domains form a lateral gate at the front which open onto the bilayer between TMs 2 and 7, and are clamped together by SecE at the back. The channel is closed by both a pore ring composed of hydrophobic SecY resides and a short helix (helix 2A) on the extracellular side of the membrane which forms a plug. The plug probably moves laterally to allow the channel to open. The ring and the pore may move independently. The sequence is that of Protein translocase subunit SecY 2 from Lactobacillus kefiranofaciens subsp. kefiranofaciens.